The chain runs to 100 residues: uncharacterized protein (100 aa).

This sequence belongs to the ycf15 family.

It localises to the plastid. The protein resides in the chloroplast. This is an uncharacterized protein from Panax ginseng (Korean ginseng).